A 415-amino-acid chain; its full sequence is Alpha-2Db adrenergic receptor (415 aa).

At 1–33 (MDLSTITFLLPNSSEDTNGTSAPRLPPHSQCAS) the chain is on the extracellular side. N-linked (GlcNAc...) asparagine glycosylation is found at N12 and N18. A helical membrane pass occupies residues 34–58 (VLIVLVVTVIILVTIVGNVLVVVAV). Residues 59 to 70 (FTSRALRAPQNL) are Cytoplasmic-facing. Residues 71-96 (FLVSLAAADILVATLVIPFSLANEVM) form a helical membrane-spanning segment. The Extracellular segment spans residues 97–106 (GYWYLGSTWC). The cysteines at positions 106 and 179 are disulfide-linked. The chain crosses the membrane as a helical span at residues 107 to 129 (AFYLALDVLFCTSSIVHLCAISL). The Cytoplasmic segment spans residues 130–150 (DRYWSVTKAVSYNLKRTPRRI). A helical membrane pass occupies residues 151-173 (KIMITVVWVISAVISFPPLLMTK). The Extracellular segment spans residues 174–184 (HDELECLLNNE). N183 carries N-linked (GlcNAc...) asparagine glycosylation. Residues 185-208 (TWYILSSCIVSFFAPGLIMILVYC) traverse the membrane as a helical segment. Topologically, residues 209–339 (RIYRVAKQRA…QMREKRFTFV (131 aa)) are cytoplasmic. The tract at residues 234–299 (QSETCFVRKG…EGAQSCPKPN (66 aa)) is disordered. Residues 276 to 286 (NRHRNSRFAKS) are compositionally biased toward basic residues. Residues 340–363 (LAVVMGVFVLCWFPFFFTYSLHAI) form a helical membrane-spanning segment. Over 364 to 376 (CRKSCTIPDSLFN) the chain is Extracellular. A helical transmembrane segment spans residues 377-397 (LFFWIGYCNSSVNPIIYTIFN). Residues 398 to 415 (RDFRKAFKKIMCRHSTRT) lie on the Cytoplasmic side of the membrane.

The protein belongs to the G-protein coupled receptor 1 family. Adrenergic receptor subfamily. ADRA2D sub-subfamily.

It localises to the cell membrane. Alpha-2 adrenergic receptors mediate the catecholamine-induced inhibition of adenylate cyclase through the action of G proteins. The order of potency for this receptor is dexmedetomidine &gt; norepinephrine = epinephrine &gt; oxymetazoline. In Danio rerio (Zebrafish), this protein is Alpha-2Db adrenergic receptor (adra2db).